The following is an 80-amino-acid chain: Cytochrome c oxidase subunit 7B, mitochondrial (80 aa).

The N-terminal 24 residues, 1-24 (MFPLVKNALNRLQVRSIQQTMARQ), are a transit peptide targeting the mitochondrion. Residues 25-32 (SHQKRTPD) lie on the Mitochondrial matrix side of the membrane. A helical membrane pass occupies residues 33–59 (FHDKYGNAVLASGATFCIVTWTYVATQ). The Mitochondrial intermembrane portion of the chain corresponds to 60–80 (VGIEWNLSPVGRVTPKEWRNQ).

It belongs to the cytochrome c oxidase VIIb family. As to quaternary structure, component of the cytochrome c oxidase (complex IV, CIV), a multisubunit enzyme composed of 14 subunits. The complex is composed of a catalytic core of 3 subunits MT-CO1, MT-CO2 and MT-CO3, encoded in the mitochondrial DNA, and 11 supernumerary subunits COX4I, COX5A, COX5B, COX6A, COX6B, COX6C, COX7A, COX7B, COX7C, COX8 and NDUFA4, which are encoded in the nuclear genome. The complex exists as a monomer or a dimer and forms supercomplexes (SCs) in the inner mitochondrial membrane with NADH-ubiquinone oxidoreductase (complex I, CI) and ubiquinol-cytochrome c oxidoreductase (cytochrome b-c1 complex, complex III, CIII), resulting in different assemblies (supercomplex SCI(1)III(2)IV(1) and megacomplex MCI(2)III(2)IV(2)).

Its subcellular location is the mitochondrion inner membrane. It functions in the pathway energy metabolism; oxidative phosphorylation. Functionally, component of the cytochrome c oxidase, the last enzyme in the mitochondrial electron transport chain which drives oxidative phosphorylation. The respiratory chain contains 3 multisubunit complexes succinate dehydrogenase (complex II, CII), ubiquinol-cytochrome c oxidoreductase (cytochrome b-c1 complex, complex III, CIII) and cytochrome c oxidase (complex IV, CIV), that cooperate to transfer electrons derived from NADH and succinate to molecular oxygen, creating an electrochemical gradient over the inner membrane that drives transmembrane transport and the ATP synthase. Cytochrome c oxidase is the component of the respiratory chain that catalyzes the reduction of oxygen to water. Electrons originating from reduced cytochrome c in the intermembrane space (IMS) are transferred via the dinuclear copper A center (CU(A)) of subunit 2 and heme A of subunit 1 to the active site in subunit 1, a binuclear center (BNC) formed by heme A3 and copper B (CU(B)). The BNC reduces molecular oxygen to 2 water molecules using 4 electrons from cytochrome c in the IMS and 4 protons from the mitochondrial matrix. Plays a role in proper central nervous system (CNS) development in vertebrates. This is Cytochrome c oxidase subunit 7B, mitochondrial (COX7B) from Pongo abelii (Sumatran orangutan).